The sequence spans 628 residues: uncharacterized protein (628 aa).

Disordered regions lie at residues methionine 1–alanine 65 and serine 80–serine 125. Residues isoleucine 12–proline 21 are compositionally biased toward low complexity. A compositionally biased stretch (polar residues) spans proline 25–glutamate 37. Composition is skewed to low complexity over residues serine 48–serine 64 and serine 87–serine 102. Positions aspartate 103–serine 116 are enriched in basic and acidic residues. 12 consecutive transmembrane segments (helical) span residues isoleucine 157 to leucine 177, valine 203 to methionine 223, leucine 230 to glycine 250, phenylalanine 259 to phenylalanine 279, isoleucine 294 to alanine 314, leucine 324 to phenylalanine 344, leucine 417 to tyrosine 437, valine 454 to proline 474, methionine 483 to valine 503, valine 511 to valine 531, valine 542 to alanine 562, and methionine 583 to phenylalanine 603.

The protein belongs to the major facilitator superfamily. Allantoate permease family.

Its subcellular location is the membrane. This is an uncharacterized protein from Schizosaccharomyces pombe (strain 972 / ATCC 24843) (Fission yeast).